The sequence spans 841 residues: Translation initiation factor IF-2 (841 aa).

Residues Gln94–Thr255 are disordered. Residues Ser96–Arg135 show a composition bias toward basic and acidic residues. Residues Asn136–Ala175 are compositionally biased toward low complexity. Composition is skewed to basic and acidic residues over residues Asp176 to Pro217 and Thr225 to Arg234. A compositionally biased stretch (basic residues) spans Arg235–Ala248. The 170-residue stretch at Ser341 to Lys510 folds into the tr-type G domain. A G1 region spans residues Gly350–Thr357. Residue Gly350 to Thr357 coordinates GTP. A G2 region spans residues Gly375–His379. The segment at Asp396–Gly399 is G3. GTP contacts are provided by residues Asp396–His400 and Asn450–Asp453. The tract at residues Asn450–Asp453 is G4. The segment at Ser486–Lys488 is G5.

This sequence belongs to the TRAFAC class translation factor GTPase superfamily. Classic translation factor GTPase family. IF-2 subfamily.

Its subcellular location is the cytoplasm. Its function is as follows. One of the essential components for the initiation of protein synthesis. Protects formylmethionyl-tRNA from spontaneous hydrolysis and promotes its binding to the 30S ribosomal subunits. Also involved in the hydrolysis of GTP during the formation of the 70S ribosomal complex. In Pseudomonas syringae pv. tomato (strain ATCC BAA-871 / DC3000), this protein is Translation initiation factor IF-2.